A 172-amino-acid chain; its full sequence is RNA silencing suppressor p19 (172 aa).

The segment covering Met-1–Asp-20 has biased composition (basic and acidic residues). The segment at Met-1–Thr-27 is disordered.

This sequence belongs to the tombusvirus protein p19 family. As to quaternary structure, homodimer.

Acts as a suppressor of RNA-mediated gene silencing, also known as post-transcriptional gene silencing (PTGS), a mechanism of plant viral defense that limits the accumulation of viral RNAs. Binds to short interfering RNAs (siRNAs) with high affinity. Acts as a molecular caliper to specifically select siRNAs based on the length of the duplex region of the RNA. The protein is RNA silencing suppressor p19 of Dianthus caryophyllus (Carnation).